A 316-amino-acid polypeptide reads, in one-letter code: Pantothenate kinase (316 aa).

Gly95 to Ser102 serves as a coordination point for ATP.

It belongs to the prokaryotic pantothenate kinase family.

It is found in the cytoplasm. The catalysed reaction is (R)-pantothenate + ATP = (R)-4'-phosphopantothenate + ADP + H(+). It functions in the pathway cofactor biosynthesis; coenzyme A biosynthesis; CoA from (R)-pantothenate: step 1/5. This chain is Pantothenate kinase, found in Salmonella choleraesuis (strain SC-B67).